Consider the following 181-residue polypeptide: Large ribosomal subunit protein uL5 (181 aa).

It belongs to the universal ribosomal protein uL5 family. As to quaternary structure, part of the 50S ribosomal subunit; part of the 5S rRNA/L5/L18/L25 subcomplex. Contacts the 5S rRNA and the P site tRNA. Forms a bridge to the 30S subunit in the 70S ribosome.

This is one of the proteins that bind and probably mediate the attachment of the 5S RNA into the large ribosomal subunit, where it forms part of the central protuberance. In the 70S ribosome it contacts protein S13 of the 30S subunit (bridge B1b), connecting the 2 subunits; this bridge is implicated in subunit movement. Contacts the P site tRNA; the 5S rRNA and some of its associated proteins might help stabilize positioning of ribosome-bound tRNAs. In Helicobacter pylori (strain ATCC 700392 / 26695) (Campylobacter pylori), this protein is Large ribosomal subunit protein uL5.